Consider the following 344-residue polypeptide: MAQKENAYPWPYGRQTAQPGLNTLPQRVLRKEPVTPSALVLMSRSNAQPTAAPGQKVVENSSGTPNIPKRSFTIDDFEIGRPLGKGKFGNVYLAREKKSHFIVALKVLFKSQIEKEGVEHQLRREIEIQAHLQHPNILRLYNYFYDRRRIYLILEYAPRGELYKELQKSRTFDEQRTATIMEELADALTYCHAKKVIHRDIKPENLLLGLRGELKIADFGWSVHAPSLRRKTMCGTLDYLPPEMIEGRTHNEKVDLWCIGVLCYELLVGNPPFESASHNETYRRIVKVDLKFPPSVPLGAQDFIYKLLKHNPSERLPLAQVSAHPWVRTHSRRVLPPSAPQSVP.

Position 35 is a phosphothreonine (Thr35). Residues Asn46 to Pro65 are disordered. Ser62 bears the Phosphoserine mark. A Phosphothreonine modification is found at Thr64. The Protein kinase domain occupies Phe77–Val327. ATP-binding positions include Leu83–Val91 and Lys106. The Proton acceptor role is filled by Asp200. Lys215 is subject to N6-acetyllysine. Position 227 is a phosphoserine (Ser227). Thr232 is modified (phosphothreonine; by autocatalysis).

Belongs to the protein kinase superfamily. Ser/Thr protein kinase family. Aurora subfamily. In terms of assembly, component of the chromosomal passenger complex (CPC) composed of at least BIRC5/survivin, CDCA8/borealin, INCENP, AURKB or AURKC; predominantly independent AURKB- and AURKC-containing complexes exist. Associates with RACGAP1 during M phase. Interacts with SPDYC; this interaction may be required for proper localization of active, Thr-232-phosphorylated AURKB form during prometaphase and metaphase. Interacts with p53/TP53. Interacts (via the middle kinase domain) with NOC2L (via the N- and C-terminus domains). Interacts with CDCA1. Interacts with EVI5. Interacts with JTB. Interacts with NDC80. Interacts with PSMA3. Interacts with RNF2/RING1B. Interacts with SEPTIN1. Interacts with SIRT2. Interacts with TACC1. Interacts with TTC28. The phosphorylation of Thr-232 requires the binding to INCENP and occurs by means of an autophosphorylation mechanism. Thr-232 phosphorylation is indispensable for the AURKB kinase activity. Post-translationally, acetylated at Lys-215 by KAT5 at kinetochores, increasing AURKB activity and promoting accurate chromosome segregation in mitosis. In terms of processing, ubiquitinated by different BCR (BTB-CUL3-RBX1) E3 ubiquitin ligase complexes. Ubiquitinated by the BCR(KLHL9-KLHL13) E3 ubiquitin ligase complex, ubiquitination leads to removal from mitotic chromosomes and is required for cytokinesis. During anaphase, the BCR(KLHL21) E3 ubiquitin ligase complex recruits the CPC complex from chromosomes to the spindle midzone and mediates the ubiquitination of AURKB. Ubiquitination of AURKB by BCR(KLHL21) E3 ubiquitin ligase complex may not lead to its degradation by the proteasome. Deubiquitinated by USP35; inhibiting CDH1-mediated degradation of AURKB.

The protein localises to the nucleus. It localises to the chromosome. Its subcellular location is the centromere. The protein resides in the kinetochore. It is found in the cytoplasm. The protein localises to the cytoskeleton. It localises to the spindle. Its subcellular location is the midbody. The enzyme catalyses L-seryl-[protein] + ATP = O-phospho-L-seryl-[protein] + ADP + H(+). It catalyses the reaction L-threonyl-[protein] + ATP = O-phospho-L-threonyl-[protein] + ADP + H(+). Its activity is regulated as follows. Activity is greatly increased when AURKB is within the CPC complex. In particular, AURKB-phosphorylated INCENP acts as an activator of AURKB. Positive feedback between HASPIN and AURKB contributes to CPC localization. Its function is as follows. Serine/threonine-protein kinase component of the chromosomal passenger complex (CPC), a complex that acts as a key regulator of mitosis. The CPC complex has essential functions at the centromere in ensuring correct chromosome alignment and segregation and is required for chromatin-induced microtubule stabilization and spindle assembly. Involved in the bipolar attachment of spindle microtubules to kinetochores and is a key regulator for the onset of cytokinesis during mitosis. Required for central/midzone spindle assembly and cleavage furrow formation. Key component of the cytokinesis checkpoint, a process required to delay abscission to prevent both premature resolution of intercellular chromosome bridges and accumulation of DNA damage: phosphorylates CHMP4C, leading to retain abscission-competent VPS4 (VPS4A and/or VPS4B) at the midbody ring until abscission checkpoint signaling is terminated at late cytokinesis. AURKB phosphorylates the CPC complex subunits BIRC5/survivin, CDCA8/borealin and INCENP. Phosphorylation of INCENP leads to increased AURKB activity. Other known AURKB substrates involved in centromeric functions and mitosis are CENPA, DES/desmin, GPAF, KIF2C, NSUN2, RACGAP1, SEPTIN1, VIM/vimentin, HASPIN, and histone H3. A positive feedback loop involving HASPIN and AURKB contributes to localization of CPC to centromeres. Phosphorylation of VIM controls vimentin filament segregation in cytokinetic process, whereas histone H3 is phosphorylated at 'Ser-10' and 'Ser-28' during mitosis (H3S10ph and H3S28ph, respectively). AURKB is also required for kinetochore localization of BUB1 and SGO1. Phosphorylation of p53/TP53 negatively regulates its transcriptional activity. Key regulator of active promoters in resting B- and T-lymphocytes: acts by mediating phosphorylation of H3S28ph at active promoters in resting B-cells, inhibiting RNF2/RING1B-mediated ubiquitination of histone H2A and enhancing binding and activity of the USP16 deubiquitinase at transcribed genes. Acts as an inhibitor of CGAS during mitosis: catalyzes phosphorylation of the N-terminus of CGAS during the G2-M transition, blocking CGAS liquid phase separation and activation, and thereby preventing CGAS-induced autoimmunity. Phosphorylates KRT5 during anaphase and telophase. Phosphorylates ATXN10 which promotes phosphorylation of ATXN10 by PLK1 and may play a role in the regulation of cytokinesis and stimulating the proteasomal degradation of ATXN10. The polypeptide is Aurora kinase B (AURKB) (Bos taurus (Bovine)).